A 214-amino-acid chain; its full sequence is Adenylate kinase (214 aa).

14-19 (GSGKGT) provides a ligand contact to ATP. The segment at 32–61 (SVGKVLRTVMESNTAEADVVKKFIKSGKLV) is NMP. AMP contacts are provided by residues Arg-38, 59–61 (KLV), 87–90 (GYPR), and Gln-94. The interval 124–162 (GRISCTDCGTIYNKLYCMPKINGVCDICNSSSFQNRVDD) is LID. Arg-125 contributes to the ATP binding site. Zn(2+)-binding residues include Cys-128 and Cys-131. 134 to 135 (IY) is a binding site for ATP. Cys-148 and Cys-151 together coordinate Zn(2+). Residues Arg-159 and Arg-170 each coordinate AMP. Gln-198 provides a ligand contact to ATP.

It belongs to the adenylate kinase family. In terms of assembly, monomer.

The protein localises to the cytoplasm. It carries out the reaction AMP + ATP = 2 ADP. It participates in purine metabolism; AMP biosynthesis via salvage pathway; AMP from ADP: step 1/1. Catalyzes the reversible transfer of the terminal phosphate group between ATP and AMP. Plays an important role in cellular energy homeostasis and in adenine nucleotide metabolism. This Orientia tsutsugamushi (strain Ikeda) (Rickettsia tsutsugamushi) protein is Adenylate kinase.